The primary structure comprises 202 residues: Holliday junction branch migration complex subunit RuvA (202 aa).

Positions 1-65 (MIGYLEGRVV…EDALELFGFA (65 aa)) are domain I. Positions 66-144 (SLDDRETFRT…GRAPAAGLAP (79 aa)) are domain II. The segment at 145 to 155 (SVPIPGGVAGD) is flexible linker. Residues 155–202 (DVVAGLTNLGYPEPEARQVAAEVLEAEPDLDVAAALRQALKRLASAKK) are domain III.

The protein belongs to the RuvA family. In terms of assembly, homotetramer. Forms an RuvA(8)-RuvB(12)-Holliday junction (HJ) complex. HJ DNA is sandwiched between 2 RuvA tetramers; dsDNA enters through RuvA and exits via RuvB. An RuvB hexamer assembles on each DNA strand where it exits the tetramer. Each RuvB hexamer is contacted by two RuvA subunits (via domain III) on 2 adjacent RuvB subunits; this complex drives branch migration. In the full resolvosome a probable DNA-RuvA(4)-RuvB(12)-RuvC(2) complex forms which resolves the HJ.

It is found in the cytoplasm. Its function is as follows. The RuvA-RuvB-RuvC complex processes Holliday junction (HJ) DNA during genetic recombination and DNA repair, while the RuvA-RuvB complex plays an important role in the rescue of blocked DNA replication forks via replication fork reversal (RFR). RuvA specifically binds to HJ cruciform DNA, conferring on it an open structure. The RuvB hexamer acts as an ATP-dependent pump, pulling dsDNA into and through the RuvAB complex. HJ branch migration allows RuvC to scan DNA until it finds its consensus sequence, where it cleaves and resolves the cruciform DNA. The chain is Holliday junction branch migration complex subunit RuvA from Solidesulfovibrio magneticus (strain ATCC 700980 / DSM 13731 / RS-1) (Desulfovibrio magneticus).